A 111-amino-acid polypeptide reads, in one-letter code: Flagellar hook-basal body complex protein FliE (111 aa).

Belongs to the FliE family.

It localises to the bacterial flagellum basal body. The sequence is that of Flagellar hook-basal body complex protein FliE from Brucella abortus (strain S19).